The chain runs to 416 residues: MEERPAETNANVDNSASPSVAQLAGRFREQAAAAKETPASKPTRRKPPCSLPLFPPKVDLGQNGEEKSPPNASHPPKFKVKSSPLIEKLQANLTFDPAALLPGASPKSPGLKAMVSPFHSPPSTPSSPGVRSRPSEAEEVPVSFDQPPEGSHLPCYNKVRTRGSIKRRPPSRRFRRSQSDCGELGDFRAVESSQQNGAKEEDGDEVLPSKSKAPGSPLSSEGAAGEGVRTLGPAEKPPLRRSPSRTEKQEEDRATEEAKNGEKARRSSEEVDGQHPAQEEVPESPQTSGPEAENRCGSPREEKPAGEEAEMEKATEVKGERVQNEEVGPEHDSQETKKLEEGAAVKETPHSPPGGVKGGDVPKQEKGKEKQQEGAVLEPGCSPQTGPAQLETSSEVQSEPAVPKPEDDTPVQDTKM.

2 disordered regions span residues 1 to 84 (MEER…KSSP) and 98 to 416 (AALL…DTKM). Residues 8–20 (TNANVDNSASPSV) are compositionally biased toward polar residues. Ser-17 bears the Phosphoserine mark. Residue Ser-68 is modified to Phosphoserine; by MAPK8; in vitro. Ser-82 carries the post-translational modification Phosphoserine. Ser-83 is modified (phosphoserine; by MAPK8; in vitro). Ser-105 bears the Phosphoserine mark. Ser-108 carries the phosphoserine; by MAPK12 and MAPK13 modification. Ser-116, Ser-120, and Ser-123 each carry phosphoserine. Thr-124 carries the phosphothreonine modification. Phosphoserine is present on residues Ser-126, Ser-127, Ser-135, and Ser-143. Positions 159-176 (VRTRGSIKRRPPSRRFRR) are enriched in basic residues. At Ser-177 the chain carries Phosphoserine. At Ser-179 the chain carries Phosphoserine; by MAPKAPK2 and MAPKAPK3. Position 216 is a phosphoserine; by MAPK8; in vitro (Ser-216). Positions 227–330 (GVRTLGPAEK…RVQNEEVGPE (104 aa)) constitute an RCSD domain. Ser-244 carries the phosphoserine; by MAPKAPK2 or MAPKAPK3; in vitro modification. Positions 244–273 (SRTEKQEEDRATEEAKNGEKARRSSEEVDG) are enriched in basic and acidic residues. Residues Ser-267, Ser-268, Ser-284, Ser-298, and Ser-333 each carry the phosphoserine modification. Residues 292–349 (AENRCGSPREEKPAGEEAEMEKATEVKGERVQNEEVGPEHDSQETKKLEEGAAVKETP) show a composition bias toward basic and acidic residues. Thr-336 carries the phosphothreonine modification. Ser-351 bears the Phosphoserine mark. Over residues 360–372 (DVPKQEKGKEKQQ) the composition is skewed to basic and acidic residues. A compositionally biased stretch (polar residues) spans 382-397 (SPQTGPAQLETSSEVQ).

Interacts with CAPZA2 and CAPZB. In terms of processing, dephosphorylation results in its dissociation from CAPZA2. Highly expressed in skeletal muscle and more weakly in cardiac muscle. Also expressed in several lymphoid organs, including spleen, thymus, peripheral blood leukocytes, lymph node and bone marrow.

In terms of biological role, stress-induced phosphorylation of CAPZIP may regulate the ability of F-actin-capping protein to remodel actin filament assembly. This Homo sapiens (Human) protein is CapZ-interacting protein (RCSD1).